The primary structure comprises 631 residues: Plastidic ATP/ADP-transporter (631 aa).

11 helical membrane-spanning segments follow: residues 106 to 126 (IELV…CILF), 149 to 169 (IIPF…MLLY), 180 to 200 (ALFY…GFVL), 238 to 258 (LFYV…FWGF), 271 to 290 (FYPL…GRTV), 313 to 333 (GMMS…WWVN), 369 to 389 (LATL…TWKS), 407 to 427 (DFST…QWIF), 442 to 462 (VLLL…PLAP), 465 to 485 (AKFG…QNIF), and 543 to 563 (LASS…AWLG). The disordered stretch occupies residues 586–631 (ERASLKIPVVSQNENGNGPLSSESSLNPAGGDSTNASSEPSSPRSL). Polar residues predominate over residues 595 to 631 (VSQNENGNGPLSSESSLNPAGGDSTNASSEPSSPRSL).

This sequence belongs to the ADP/ATP translocase tlc (TC 2.A.12.2) family.

The protein resides in the plastid. The protein localises to the chloroplast membrane. The sequence is that of Plastidic ATP/ADP-transporter from Solanum tuberosum (Potato).